Consider the following 382-residue polypeptide: Na(+)/H(+) antiporter NhaA (382 aa).

A run of 11 helical transmembrane segments spans residues 13–33, 58–78, 94–114, 124–144, 153–173, 179–199, 204–224, 256–276, 285–305, 325–345, and 357–377; these read IGGI…NSPF, LLLW…GLEI, LVPA…FIFF, GWAI…SLLG, ILLT…IALF, SLLS…LNYF, ISVF…SGVH, VVFL…FVGL, VVLG…FLSL, VYGI…IGSL, and MVKI…FLVL.

Belongs to the NhaA Na(+)/H(+) (TC 2.A.33) antiporter family.

Its subcellular location is the cell inner membrane. The catalysed reaction is Na(+)(in) + 2 H(+)(out) = Na(+)(out) + 2 H(+)(in). Na(+)/H(+) antiporter that extrudes sodium in exchange for external protons. This Legionella pneumophila (strain Paris) protein is Na(+)/H(+) antiporter NhaA.